The sequence spans 625 residues: Interleukin-1 receptor-associated kinase-like 2 (625 aa).

One can recognise a Death domain in the interval 13 to 94 (LDDLCRNMDA…RAAQIILNWK (82 aa)). A disordered region spans residues 111–181 (KPEKPLAASV…SSDSKDFSTS (71 aa)). Position 144 is a phosphoserine (serine 144). A compositionally biased stretch (polar residues) spans 169-181 (LPTSSDSKDFSTS). The 280-residue stretch at 210-489 (FNQNRKISQG…LCLRRRNTSL (280 aa)) folds into the Protein kinase domain. ATP-binding positions include 216 to 224 (ISQGTFADV), lysine 237, and 337 to 340 (KSSN). The segment at 510–540 (LPWSGLSEGTGSSSNTPEETDDVDNSSLDAS) is disordered. Over residues 516 to 526 (SEGTGSSSNTP) the composition is skewed to polar residues.

This sequence belongs to the protein kinase superfamily. TKL Ser/Thr protein kinase family. Pelle subfamily. As to quaternary structure, interacts with MYD88. IL-1 stimulation leads to the formation of a signaling complex which dissociates from the IL-1 receptor following the binding of PELI1. Expressed in spleen, thymus, prostate, lung, liver, skeletal muscle, kidney, pancreas and peripheral blood leukocytes.

Functionally, binds to the IL-1 type I receptor following IL-1 engagement, triggering intracellular signaling cascades leading to transcriptional up-regulation and mRNA stabilization. The chain is Interleukin-1 receptor-associated kinase-like 2 (IRAK2) from Homo sapiens (Human).